We begin with the raw amino-acid sequence, 912 residues long: Metabotropic glutamate receptor 4 (912 aa).

Positions 1-32 (MPGKSGLGWWWARLPLCLLLSLYGPWMPSSLG) are cleaved as a signal peptide. The Extracellular portion of the chain corresponds to 33–586 (KPKGHPHMNS…PIIKLEWDSP (554 aa)). Residues C67 and C109 are joined by a disulfide bond. An N-linked (GlcNAc...) asparagine glycan is attached at N98. Residues S159, 180–182 (AST), and Y230 contribute to the L-glutamate site. Cystine bridges form between C249-C538, C372-C388, C428-C435, C520-C539, C524-C542, C545-C557, and C560-C573. An N-linked (GlcNAc...) asparagine glycan is attached at N301. D312 serves as a coordination point for L-glutamate. L-glutamate is bound at residue K405. N454 and N484 each carry an N-linked (GlcNAc...) asparagine glycan. Residue N569 is glycosylated (N-linked (GlcNAc...) asparagine). The chain crosses the membrane as a helical span at residues 587–607 (WAVLPLFLAVVGIAATLFVVI). Topologically, residues 608-624 (TFVRYNDTPIVKASGRE) are cytoplasmic. The chain crosses the membrane as a helical span at residues 625–645 (LSYVLLAGIFLCYATTFLMIA). The Extracellular segment spans residues 646–653 (EPDLGTCS). Residues 654 to 671 (LRRIFLGLGMSISYAALL) form a helical membrane-spanning segment. Residues 672–699 (TKTNRIYRIFEQGKRSVSAPRFISPASQ) are Cytoplasmic-facing. Residues 700 to 720 (LAITFSLISLQLLGICVWFVV) traverse the membrane as a helical segment. Residues 721–751 (DPSHSVVDFQDQRTLDPRFARGVLKCDISDL) are Extracellular-facing. A helical membrane pass occupies residues 752–772 (SLICLLGYSMLLMVTCTVYAI). Residues 773-786 (KTRGVPETFNEAKP) lie on the Cytoplasmic side of the membrane. Residues 787 to 807 (IGFTMYTTCIVWLAFIPIFFG) traverse the membrane as a helical segment. Residues 808 to 826 (TSQSADKLYIQTTTLTVSV) lie on the Extracellular side of the membrane. A helical transmembrane segment spans residues 827–847 (SLSASVSLGMLYMPKVYIILF). The Cytoplasmic portion of the chain corresponds to 848 to 912 (HPEQNVPKRK…TYVTYTNHAI (65 aa)).

Belongs to the G-protein coupled receptor 3 family. As to quaternary structure, interacts with PICK1.

The protein resides in the cell membrane. Its function is as follows. G-protein coupled receptor for glutamate. Ligand binding causes a conformation change that triggers signaling via guanine nucleotide-binding proteins (G proteins) and modulates the activity of down-stream effectors. Signaling inhibits adenylate cyclase activity. This chain is Metabotropic glutamate receptor 4 (GRM4), found in Macaca fascicularis (Crab-eating macaque).